Consider the following 344-residue polypeptide: Heat-inducible transcription repressor HrcA (344 aa).

It belongs to the HrcA family.

Its function is as follows. Negative regulator of class I heat shock genes (grpE-dnaK-dnaJ and groELS operons). Prevents heat-shock induction of these operons. This is Heat-inducible transcription repressor HrcA from Streptococcus pneumoniae (strain Taiwan19F-14).